A 100-amino-acid polypeptide reads, in one-letter code: Large ribosomal subunit protein eL30 (100 aa).

It belongs to the eukaryotic ribosomal protein eL30 family.

The protein is Large ribosomal subunit protein eL30 (rpl30e) of Aeropyrum pernix (strain ATCC 700893 / DSM 11879 / JCM 9820 / NBRC 100138 / K1).